A 423-amino-acid polypeptide reads, in one-letter code: Alpha-1-antichymotrypsin (423 aa).

An N-terminal signal peptide occupies residues methionine 1 to cysteine 23. Residues asparagine 93, asparagine 106, asparagine 127, asparagine 186, and asparagine 271 are each glycosylated (N-linked (GlcNAc...) asparagine). The tract at residues glycine 369 to arginine 394 is RCL.

It belongs to the serpin family. In terms of assembly, interacts with DNAJC1. In terms of tissue distribution, plasma.

It localises to the secreted. Functionally, although its physiological function is unclear, it can inhibit neutrophil cathepsin G and mast cell chymase, both of which can convert angiotensin-1 to the active angiotensin-2. The chain is Alpha-1-antichymotrypsin (SERPINA3) from Pongo abelii (Sumatran orangutan).